The sequence spans 100 residues: Large ribosomal subunit protein eL21 (100 aa).

The segment covering 1–21 (MVKRTHGYRYKSRKLLRKKPR) has biased composition (basic residues). The segment at 1–22 (MVKRTHGYRYKSRKLLRKKPRE) is disordered.

Belongs to the eukaryotic ribosomal protein eL21 family.

This Pyrobaculum neutrophilum (strain DSM 2338 / JCM 9278 / NBRC 100436 / V24Sta) (Thermoproteus neutrophilus) protein is Large ribosomal subunit protein eL21.